Reading from the N-terminus, the 609-residue chain is Rhotekin-2 (609 aa).

The REM-1 domain occupies 5–81 (SLRGPALRLA…LQKLEEQIAN (77 aa)). Positions 56–91 (KNLMVCNARLMAYTSELQKLEEQIANQTGRCDVKFE) form a coiled coil. Residues 286–393 (EDAFAGFLNQ…WMEAFWQHFF (108 aa)) form the PH domain. Disordered regions lie at residues 495-520 (HDEKGKKRQAPLPPSDKLPFSLKSQS) and 554-609 (KPMA…QAQV). The segment covering 569–582 (RLSDGEHTDTKTNF) has biased composition (basic and acidic residues).

As to expression, expressed in lymphocytes, CD4 positive T-cells and bone marrow-derived cells. Also expressed in lung, colon, thymus and brain.

Functionally, may play an important role in lymphopoiesis. The chain is Rhotekin-2 (RTKN2) from Homo sapiens (Human).